The sequence spans 164 residues: Cyclin-dependent kinase inhibitor 1 (164 aa).

Ser-2 bears the N-acetylserine mark. Residue Ser-2 forms a Glycyl serine ester (Ser-Gly) (interchain with G-Cter in ubiquitin) linkage. The segment at 13–41 (HGSKACRRLFGPVDSEQLRRDCDALMAGC) adopts a C4-type zinc-finger fold. The segment at 17-24 (ACRRLFGP) is required for binding cyclins. The tract at residues 53–58 (FVTETP) is required for binding CDKs. The segment at 80 to 164 (AGPRGGRDDL…RRLIFSKRKP (85 aa)) is disordered. A Phosphoserine; by GSK3-beta modification is found at Ser-114. Position 130 is a phosphoserine (Ser-130). The PIP-box K+4 motif motif lies at 140–164 (RKRRQTSMTDFYHSKRRLIFSKRKP). A Nuclear localization signal motif is present at residues 141–156 (KRRQTSMTDFYHSKRR). Phosphothreonine; by PKA, PKB/AKT1, PIM1 and PIM2 is present on Thr-145. Ser-146 is subject to Phosphoserine; by PKC and NUAK1. Residues 152–164 (HSKRRLIFSKRKP) are interaction with TRIM39. A compositionally biased stretch (basic residues) spans 153 to 164 (SKRRLIFSKRKP). Ser-160 is modified (phosphoserine).

The protein belongs to the CDI family. Interacts with HDAC1; the interaction is prevented by competitive binding of C10orf90/FATS to HDAC1 facilitating acetylation and protein stabilization of CDKN1A/p21. Interacts with MKRN1. Interacts with PSMA3. Interacts with PCNA. Component of the ternary complex, cyclin D-CDK4-CDKN1A. Interacts (via its N-terminal domain) with CDK4; the interaction promotes the assembly of the cyclin D-CDK4 complex, its nuclear translocation and promotes the cyclin D-dependent enzyme activity of CDK4. Binding to CDK2 leads to CDK2/cyclin E inactivation at the G1-S phase DNA damage checkpoint, thereby arresting cells at the G1-S transition during DNA repair. Interacts with PIM1. Interacts with STK11 and NUAK1. Interacts with DTL and TRIM39. Interacts with PKP3; the interaction sequesters CDKN1A to the cytoplasm thereby repressing its role as an inhibitor of CDK4- and CDK6-driven RB1 phosphorylation. Phosphorylation of Thr-145 by Akt or of Ser-146 by PKC impairs binding to PCNA. Phosphorylation at Ser-114 by GSK3-beta enhances ubiquitination by the DCX(DTL) complex. Phosphorylation of Thr-145 by PIM2 enhances protein stability and inhibits cell proliferation. Phosphorylation of Thr-145 by PIM1 results in the relocation of CDKN1A to the cytoplasm and enhanced CDKN1A protein stability. UV radiation-induced phosphorylation at Ser-146 by NUAK1 leads to its degradation. Post-translationally, ubiquitinated by MKRN1; leading to polyubiquitination and 26S proteasome-dependent degradation. Ubiquitinated by the DCX(DTL) complex, also named CRL4(CDT2) complex, leading to its degradation during S phase or following UV irradiation. Ubiquitination by the DCX(DTL) complex is essential to control replication licensing and is PCNA-dependent: interacts with PCNA via its PIP-box, while the presence of the containing the 'K+4' motif in the PIP box, recruit the DCX(DTL) complex, leading to its degradation. Ubiquitination at Ser-2 leads to degradation by the proteasome pathway. Ubiquitinated by RNF114; leading to proteasomal degradation. In terms of processing, acetylation leads to protein stability. Acetylated in vitro on Lys-141, Lys-154, Lys-161 and Lys-163. Deacetylation by HDAC1 is prevented by competitive binding of C10orf90/FATS to HDAC1.

The protein localises to the cytoplasm. The protein resides in the nucleus. In terms of biological role, may be involved in p53/TP53 mediated inhibition of cellular proliferation in response to DNA damage. Binds to and inhibits cyclin-dependent kinase activity, preventing phosphorylation of critical cyclin-dependent kinase substrates and blocking cell cycle progression. Functions in the nuclear localization and assembly of cyclin D-CDK4 complex and promotes its kinase activity towards RB1. At higher stoichiometric ratios, inhibits the kinase activity of the cyclin D-CDK4 complex. Inhibits DNA synthesis by DNA polymerase delta by competing with POLD3 for PCNA binding. Plays an important role in controlling cell cycle progression and DNA damage-induced G2 arrest. Negatively regulates the CDK4- and CDK6-driven phosphorylation of RB1 in keratinocytes, thereby resulting in the release of E2F1 and subsequent transcription of E2F1-driven G1/S phase promoting genes. This Felis catus (Cat) protein is Cyclin-dependent kinase inhibitor 1 (CDKN1A).